A 234-amino-acid chain; its full sequence is UPF0758 protein STH371 (234 aa).

The MPN domain maps to 110 to 232 (DLCNPRAVFE…YTSFRERGLL (123 aa)). Positions 181, 183, and 194 each coordinate Zn(2+). The JAMM motif motif lies at 181 to 194 (HNHPSGDPTPSRED).

It belongs to the UPF0758 family.

The polypeptide is UPF0758 protein STH371 (Symbiobacterium thermophilum (strain DSM 24528 / JCM 14929 / IAM 14863 / T)).